A 235-amino-acid chain; its full sequence is Isoprenyl transferase (235 aa).

The active site involves Asp21. Asp21 serves as a coordination point for Mg(2+). Residues 22–25, Trp26, Lys34, His38, and 66–68 each bind substrate; these read GNAR and SSE. Residue Asn69 is the Proton acceptor of the active site. Substrate is bound by residues Trp70, Arg72, Arg183, and 189–191; that span reads RIS. Glu202 contacts Mg(2+).

This sequence belongs to the UPP synthase family. As to quaternary structure, homodimer. Requires Mg(2+) as cofactor.

Functionally, catalyzes the condensation of isopentenyl diphosphate (IPP) with allylic pyrophosphates generating different type of terpenoids. The protein is Isoprenyl transferase of Rickettsia conorii (strain ATCC VR-613 / Malish 7).